Here is a 450-residue protein sequence, read N- to C-terminus: UDP-N-acetylmuramoylalanine--D-glutamate ligase (450 aa).

118–124 (GSNGKTT) provides a ligand contact to ATP.

Belongs to the MurCDEF family.

It localises to the cytoplasm. The catalysed reaction is UDP-N-acetyl-alpha-D-muramoyl-L-alanine + D-glutamate + ATP = UDP-N-acetyl-alpha-D-muramoyl-L-alanyl-D-glutamate + ADP + phosphate + H(+). The protein operates within cell wall biogenesis; peptidoglycan biosynthesis. Functionally, cell wall formation. Catalyzes the addition of glutamate to the nucleotide precursor UDP-N-acetylmuramoyl-L-alanine (UMA). In Halalkalibacterium halodurans (strain ATCC BAA-125 / DSM 18197 / FERM 7344 / JCM 9153 / C-125) (Bacillus halodurans), this protein is UDP-N-acetylmuramoylalanine--D-glutamate ligase.